Reading from the N-terminus, the 537-residue chain is Lariat debranching enzyme (537 aa).

A divalent metal cation contacts are provided by cysteine 8, histidine 10, aspartate 39, and asparagine 84. The interval 124-154 is lariat recognition loop; that stretch reads SGIYKGHDFLRGHHEFPPYTESTCRSVYHVR. A divalent metal cation is bound by residues histidine 174, histidine 226, and histidine 228. 2 disordered regions span residues 242–272 and 473–537; these read KAPTKMGDGSSSSSSSSSSESDDEESTSRLP and TAAE…EDDD. Residues 251–260 show a composition bias toward low complexity; that stretch reads SSSSSSSSSS.

This sequence belongs to the lariat debranching enzyme family. Requires Fe(2+) as cofactor. The cofactor is Zn(2+). Mn(2+) is required as a cofactor.

It is found in the nucleus. Its activity is regulated as follows. Active in presence of diverse metals including Fe(2+), Zn(2+), Mn(2+). Binds two metal cations in two adjacent alpha and beta metal-binding pockets. Cleaves the 2'-5' phosphodiester linkage at the branch point of lariat intron pre-mRNAs after splicing and converts them into linear molecules that are subsequently degraded. It thereby facilitates ribonucleotide turnover. This chain is Lariat debranching enzyme (DBR1), found in Drosophila pseudoobscura pseudoobscura (Fruit fly).